The following is a 549-amino-acid chain: Glucose-6-phosphate isomerase (549 aa).

Glutamate 355 acts as the Proton donor in catalysis. Catalysis depends on residues histidine 386 and lysine 514.

The protein belongs to the GPI family.

The protein resides in the cytoplasm. The catalysed reaction is alpha-D-glucose 6-phosphate = beta-D-fructose 6-phosphate. Its pathway is carbohydrate biosynthesis; gluconeogenesis. It functions in the pathway carbohydrate degradation; glycolysis; D-glyceraldehyde 3-phosphate and glycerone phosphate from D-glucose: step 2/4. Functionally, catalyzes the reversible isomerization of glucose-6-phosphate to fructose-6-phosphate. The sequence is that of Glucose-6-phosphate isomerase from Salmonella typhi.